Here is an 88-residue protein sequence, read N- to C-terminus: Alpha-latrotoxin associated low molecular weight protein 2 (88 aa).

The first 19 residues, 1–19 (MLKLICIAFLVTVLTLVAG), serve as a signal peptide directing secretion. 3 disulfide bridges follow: C30–C66, C46–C62, and C49–C75.

The protein belongs to the arthropod CHH/MIH/GIH/VIH hormone family. Expressed by the venom gland.

Its subcellular location is the secreted. Functionally, may increase the toxicity of alpha-latrotoxin and/or other venom components. Is non-toxic to mice and to the cockroach Periplaneta americana. The sequence is that of Alpha-latrotoxin associated low molecular weight protein 2 from Latrodectus hesperus (Western black widow spider).